We begin with the raw amino-acid sequence, 197 residues long: Superoxide dismutase [Fe] (197 aa).

H26, H75, D157, and H161 together coordinate Fe cation.

Belongs to the iron/manganese superoxide dismutase family. Homotetramer. It depends on Fe cation as a cofactor.

The enzyme catalyses 2 superoxide + 2 H(+) = H2O2 + O2. Its function is as follows. Destroys superoxide anion radicals which are normally produced within the cells and which are toxic to biological systems. This chain is Superoxide dismutase [Fe], found in Cupriavidus metallidurans (strain ATCC 43123 / DSM 2839 / NBRC 102507 / CH34) (Ralstonia metallidurans).